Here is a 230-residue protein sequence, read N- to C-terminus: Orotidine 5'-phosphate decarboxylase (230 aa).

Substrate contacts are provided by residues Asp-12, Lys-34, 61–70 (DMKLLDIDNT), Thr-116, Arg-177, Gln-186, and Arg-207. Catalysis depends on Lys-63, which acts as the Proton donor.

Belongs to the OMP decarboxylase family. Type 1 subfamily. Homodimer.

The enzyme catalyses orotidine 5'-phosphate + H(+) = UMP + CO2. It functions in the pathway pyrimidine metabolism; UMP biosynthesis via de novo pathway; UMP from orotate: step 2/2. Its function is as follows. Catalyzes the decarboxylation of orotidine 5'-monophosphate (OMP) to uridine 5'-monophosphate (UMP). In Rhizobium rhizogenes (strain K84 / ATCC BAA-868) (Agrobacterium radiobacter), this protein is Orotidine 5'-phosphate decarboxylase.